Reading from the N-terminus, the 690-residue chain is Elongation factor G (690 aa).

Residues 8-283 (EYIRNIGICA…AVVGFLPSPI (276 aa)) enclose the tr-type G domain. Residues 17–24 (AHIDAGKT), 81–85 (DTPGH), and 135–138 (NKMD) each bind GTP.

Belongs to the TRAFAC class translation factor GTPase superfamily. Classic translation factor GTPase family. EF-G/EF-2 subfamily.

The protein resides in the cytoplasm. In terms of biological role, catalyzes the GTP-dependent ribosomal translocation step during translation elongation. During this step, the ribosome changes from the pre-translocational (PRE) to the post-translocational (POST) state as the newly formed A-site-bound peptidyl-tRNA and P-site-bound deacylated tRNA move to the P and E sites, respectively. Catalyzes the coordinated movement of the two tRNA molecules, the mRNA and conformational changes in the ribosome. The chain is Elongation factor G from Rickettsia canadensis (strain McKiel).